Here is a 428-residue protein sequence, read N- to C-terminus: Cytochrome P450-terp (428 aa).

A heme-binding site is contributed by C377.

This sequence belongs to the cytochrome P450 family. Heme serves as cofactor.

The protein resides in the cytoplasm. Catalyzes the hydroxylation of alpha-terpineol. The protein is Cytochrome P450-terp (cyp108) of Pseudomonas sp.